The chain runs to 265 residues: Protein N-terminal and lysine N-methyltransferase EFM7 (265 aa).

The disordered stretch occupies residues 1–25 (MSSDHEEDSLYGATELFGEPDGFYE). S-adenosyl-L-methionine-binding positions include Trp-67, 93 to 95 (GAA), Asp-115, Trp-152, and Ser-176.

Belongs to the class I-like SAM-binding methyltransferase superfamily. EFM7 family.

Its subcellular location is the cytoplasm. Its function is as follows. S-adenosyl-L-methionine-dependent protein methyltransferase that trimethylates the N-terminal glycine 'Gly-2' of elongation factor 1-alpha, before also catalyzing the mono- and dimethylation of 'Lys-3'. This Eremothecium gossypii (strain ATCC 10895 / CBS 109.51 / FGSC 9923 / NRRL Y-1056) (Yeast) protein is Protein N-terminal and lysine N-methyltransferase EFM7.